A 613-amino-acid chain; its full sequence is Lysophospholipase 1 (613 aa).

Positions 1 to 21 are cleaved as a signal peptide; sequence MLFRGLSLWMLFLASCLSALA. In terms of domain architecture, PLA2c spans 55 to 593; that stretch reads DCPSDNIVES…YNYCWSGLYD (539 aa). Residues asparagine 142, asparagine 173, asparagine 220, asparagine 244, asparagine 281, asparagine 319, asparagine 348, asparagine 365, asparagine 494, asparagine 499, asparagine 523, asparagine 551, and asparagine 572 are each glycosylated (N-linked (GlcNAc...) asparagine).

Belongs to the lysophospholipase family.

The protein resides in the secreted. It catalyses the reaction a 1-acyl-sn-glycero-3-phosphocholine + H2O = sn-glycerol 3-phosphocholine + a fatty acid + H(+). Functionally, catalyzes the release of fatty acids from lysophospholipids. Required for survival under high osmolarity, for normal osmotic stress-induced gene expression, and for nutrient-mediated repression of sexual differentiation. This chain is Lysophospholipase 1 (plb1), found in Schizosaccharomyces pombe (strain 972 / ATCC 24843) (Fission yeast).